The chain runs to 237 residues: Sugar fermentation stimulation protein homolog (237 aa).

It belongs to the SfsA family.

The polypeptide is Sugar fermentation stimulation protein homolog (Pseudomonas putida (strain GB-1)).